The chain runs to 138 residues: MSKILCIDYGKKRIGLSITNSIRSIAFGLDTVNSNNIICTLYKYLKYEDIDTIVIGLPIRFDNSLFPIEKDIKKFIKIINNKYPKLIIKRIDERFTSKIANYYLINTRLKINQLKKNQNFLDKDKISATILLQEYIKY.

Belongs to the YqgF nuclease family.

The protein resides in the cytoplasm. In terms of biological role, could be a nuclease involved in processing of the 5'-end of pre-16S rRNA. The protein is Putative pre-16S rRNA nuclease of Karelsulcia muelleri (strain GWSS) (Sulcia muelleri).